A 130-amino-acid polypeptide reads, in one-letter code: Fluoride-specific ion channel FluC (130 aa).

4 helical membrane-spanning segments follow: residues 3–23, 38–58, 67–87, and 102–122; these read FVFL…YFVG, LGTF…GHLA, FGIF…SYGL, and VSYV…GWFL. The Na(+) site is built by glycine 77 and threonine 80.

It belongs to the fluoride channel Fluc/FEX (TC 1.A.43) family.

It is found in the cell inner membrane. The enzyme catalyses fluoride(in) = fluoride(out). Na(+) is not transported, but it plays an essential structural role and its presence is essential for fluoride channel function. Fluoride-specific ion channel. Important for reducing fluoride concentration in the cell, thus reducing its toxicity. In Helicobacter pylori (strain HPAG1), this protein is Fluoride-specific ion channel FluC.